A 1558-amino-acid chain; its full sequence is Hybrid PKS-NRPS synthetase TAS1 (1558 aa).

The tract at residues 27-392 is condensation (C) domain; that stretch reads YPMTKAQESL…RGLETPRAQV (366 aa). Residues 522–919 are adenylation (A) domain; that stretch reads TYKELNERSN…TITDVMPEVT (398 aa). The tract at residues 995 to 1028 is disordered; that stretch reads TSGSSSSATPSLVSSGSTTCRSPSTSSCSDSRSA. Positions 1027–1104 constitute a Carrier domain; it reads SASPAITSAV…GQVDLLCGSE (78 aa). S1063 is subject to O-(pantetheine 4'-phosphoryl)serine. Residues 1116–1144 form a disordered region; sequence LGRGRTKSPAKIVDSQGRSSPSTIPSGGR. Over residues 1131-1140 the composition is skewed to polar residues; it reads QGRSSPSTIP. A Ketosynthase family 3 (KS3) domain is found at 1145–1558; it reads KSEIAIVGIS…GVNAHCVLRS (414 aa). Active-site for beta-ketoacyl synthase activity residues include C1308, H1444, and N1484.

The protein in the N-terminal section; belongs to the NRP synthetase family. Requires pantetheine 4'-phosphate as cofactor.

The catalysed reaction is acetoacetyl-CoA + L-isoleucine + ATP = tenuazonic acid + AMP + diphosphate + CoA + 2 H(+). Its function is as follows. Hybrid PKS-NRPS synthetase that mediates the biosynthesis of the toxin tenuazonic acid (TeA), an inhibitor of protein biosynthesis on ribosomes by suppressing the release of new protein. TAS1 alone is sufficient for TeA synthesis via the condensation of isoleucine (Ile) with acetoacetyl-CoA by the N-terminal NRPS module and subsequent cyclization conducted by the C-terminal KS domain. This is Hybrid PKS-NRPS synthetase TAS1 from Gloeophyllum trabeum (strain ATCC 11539 / FP-39264 / Madison 617) (Brown rot fungus).